Consider the following 476-residue polypeptide: Probable rhodanese domain-containing dual specificity protein phosphatase (476 aa).

The region spanning Ile32–Asn190 is the Rhodanese domain. In terms of domain architecture, Tyrosine-protein phosphatase spans Tyr208–Leu350. Cys294 functions as the Phosphocysteine intermediate in the catalytic mechanism. A compositionally biased stretch (low complexity) spans Lys425 to Lys436. The interval Lys425–Leu476 is disordered. The span at Lys442–Thr461 shows a compositional bias: basic and acidic residues.

It belongs to the protein-tyrosine phosphatase family. Non-receptor class dual specificity subfamily.

It carries out the reaction O-phospho-L-tyrosyl-[protein] + H2O = L-tyrosyl-[protein] + phosphate. It catalyses the reaction O-phospho-L-seryl-[protein] + H2O = L-seryl-[protein] + phosphate. The enzyme catalyses O-phospho-L-threonyl-[protein] + H2O = L-threonyl-[protein] + phosphate. Functionally, has a dual specificity toward Ser/Thr and Tyr-containing proteins. This is Probable rhodanese domain-containing dual specificity protein phosphatase from Dictyostelium discoideum (Social amoeba).